Reading from the N-terminus, the 232-residue chain is Orotidine 5'-phosphate decarboxylase (232 aa).

Residues aspartate 11, lysine 32, 59-68, threonine 116, arginine 178, glutamine 188, glycine 208, and arginine 209 each bind substrate; that span reads DLKLHDIPHT. Lysine 61 acts as the Proton donor in catalysis.

The protein belongs to the OMP decarboxylase family. Type 1 subfamily. In terms of assembly, homodimer.

The catalysed reaction is orotidine 5'-phosphate + H(+) = UMP + CO2. Its pathway is pyrimidine metabolism; UMP biosynthesis via de novo pathway; UMP from orotate: step 2/2. Functionally, catalyzes the decarboxylation of orotidine 5'-monophosphate (OMP) to uridine 5'-monophosphate (UMP). The protein is Orotidine 5'-phosphate decarboxylase of Synechococcus sp. (strain JA-3-3Ab) (Cyanobacteria bacterium Yellowstone A-Prime).